Reading from the N-terminus, the 65-residue chain is Large ribosomal subunit protein bL35 (65 aa).

It belongs to the bacterial ribosomal protein bL35 family.

The polypeptide is Large ribosomal subunit protein bL35 (Geobacter sp. (strain M21)).